The following is a 106-amino-acid chain: UPF0145 protein APJL_0492 (106 aa).

This sequence belongs to the UPF0145 family.

The protein is UPF0145 protein APJL_0492 of Actinobacillus pleuropneumoniae serotype 3 (strain JL03).